The sequence spans 289 residues: ATP synthase gamma chain (289 aa).

This sequence belongs to the ATPase gamma chain family. As to quaternary structure, F-type ATPases have 2 components, CF(1) - the catalytic core - and CF(0) - the membrane proton channel. CF(1) has five subunits: alpha(3), beta(3), gamma(1), delta(1), epsilon(1). CF(0) has three main subunits: a, b and c.

Its subcellular location is the cell inner membrane. In terms of biological role, produces ATP from ADP in the presence of a proton gradient across the membrane. The gamma chain is believed to be important in regulating ATPase activity and the flow of protons through the CF(0) complex. This is ATP synthase gamma chain from Acinetobacter baylyi (strain ATCC 33305 / BD413 / ADP1).